Here is a 189-residue protein sequence, read N- to C-terminus: Peptidyl-tRNA hydrolase (189 aa).

Residue tyrosine 17 participates in tRNA binding. The Proton acceptor role is filled by histidine 22. Residues phenylalanine 65, asparagine 67, and asparagine 113 each contribute to the tRNA site.

The protein belongs to the PTH family. In terms of assembly, monomer.

It is found in the cytoplasm. The catalysed reaction is an N-acyl-L-alpha-aminoacyl-tRNA + H2O = an N-acyl-L-amino acid + a tRNA + H(+). Functionally, hydrolyzes ribosome-free peptidyl-tRNAs (with 1 or more amino acids incorporated), which drop off the ribosome during protein synthesis, or as a result of ribosome stalling. Its function is as follows. Catalyzes the release of premature peptidyl moieties from peptidyl-tRNA molecules trapped in stalled 50S ribosomal subunits, and thus maintains levels of free tRNAs and 50S ribosomes. In Mycoplasma genitalium (strain ATCC 33530 / DSM 19775 / NCTC 10195 / G37) (Mycoplasmoides genitalium), this protein is Peptidyl-tRNA hydrolase.